The chain runs to 90 residues: Bombyxin B-7 (90 aa).

The signal sequence occupies residues Met1–Gly20. Cystine bridges form between Cys30–Cys76, Cys42–Cys89, and Cys75–Cys80. Residues Gly49–Gly67 constitute a propeptide, c peptide like.

The protein belongs to the insulin family. In terms of assembly, heterodimer of a B chain and an A chain linked by two disulfide bonds.

The protein resides in the secreted. Brain peptide responsible for activation of prothoracic glands to produce ecdysone in insects. The sequence is that of Bombyxin B-7 (BBXB7) from Bombyx mori (Silk moth).